The chain runs to 442 residues: Transducin beta-like protein 2 (442 aa).

The disordered stretch occupies residues 36–71 (EKPSQPVCQKENEPKKSGSKKQKQNQRVRKEKPQQH). The segment covering 52–65 (SGSKKQKQNQRVRK) has biased composition (basic residues). WD repeat units follow at residues 84–123 (SHSG…QREH), 130–170 (VELD…DGGF), 182–222 (KHKA…STIN), 224–263 (NQMN…GEFQ), 273–312 (GHSA…KKQQ), 323–362 (EEAS…KEEY), and 366–404 (VHGE…RAVV). Lys-164 participates in a covalent cross-link: Glycyl lysine isopeptide (Lys-Gly) (interchain with G-Cter in SUMO2). Thr-428 carries the phosphothreonine modification.

This is Transducin beta-like protein 2 (Tbl2) from Mus musculus (Mouse).